Reading from the N-terminus, the 180-residue chain is Translation initiation factor IF-3 (180 aa).

Belongs to the IF-3 family. As to quaternary structure, monomer.

The protein resides in the cytoplasm. Its function is as follows. IF-3 binds to the 30S ribosomal subunit and shifts the equilibrium between 70S ribosomes and their 50S and 30S subunits in favor of the free subunits, thus enhancing the availability of 30S subunits on which protein synthesis initiation begins. The polypeptide is Translation initiation factor IF-3 (Salmonella typhimurium (strain LT2 / SGSC1412 / ATCC 700720)).